The primary structure comprises 371 residues: DNA repair and recombination protein rti1 (371 aa).

Residues 346–371 are disordered; that stretch reads IDHNRSMPIRRPSLTSNNSANTFSTK. The segment covering 358-371 has biased composition (polar residues); that stretch reads SLTSNNSANTFSTK.

The protein belongs to the RAD52 family. In terms of assembly, interacts with rph51 and rph54.

Its function is as follows. Active in the repair of DNA damage and in mating-type switching. Probably involved in the repair of DNA double-strands breaks. Has a role in promoting S phase completion. The sequence is that of DNA repair and recombination protein rti1 (rti1) from Schizosaccharomyces pombe (strain 972 / ATCC 24843) (Fission yeast).